The chain runs to 385 residues: tRNA (guanine(26)-N(2))-dimethyltransferase (385 aa).

Residues 1–379 (MNITEGVVEL…ATIAEIRSAT (379 aa)) enclose the Trm1 methyltransferase domain. Residues arginine 37, arginine 67, aspartate 82, aspartate 108, and alanine 109 each coordinate S-adenosyl-L-methionine. Residues cysteine 247, cysteine 250, cysteine 267, and cysteine 270 each coordinate Zn(2+).

It belongs to the class I-like SAM-binding methyltransferase superfamily. Trm1 family.

The catalysed reaction is guanosine(26) in tRNA + 2 S-adenosyl-L-methionine = N(2)-dimethylguanosine(26) in tRNA + 2 S-adenosyl-L-homocysteine + 2 H(+). Functionally, dimethylates a single guanine residue at position 26 of a number of tRNAs using S-adenosyl-L-methionine as donor of the methyl groups. This Haloquadratum walsbyi (strain DSM 16790 / HBSQ001) protein is tRNA (guanine(26)-N(2))-dimethyltransferase.